A 302-amino-acid polypeptide reads, in one-letter code: Sulfate adenylyltransferase subunit 2 (302 aa).

Belongs to the PAPS reductase family. CysD subfamily. In terms of assembly, heterodimer composed of CysD, the smaller subunit, and CysN.

The enzyme catalyses sulfate + ATP + H(+) = adenosine 5'-phosphosulfate + diphosphate. It functions in the pathway sulfur metabolism; hydrogen sulfide biosynthesis; sulfite from sulfate: step 1/3. In terms of biological role, with CysN forms the ATP sulfurylase (ATPS) that catalyzes the adenylation of sulfate producing adenosine 5'-phosphosulfate (APS) and diphosphate, the first enzymatic step in sulfur assimilation pathway. APS synthesis involves the formation of a high-energy phosphoric-sulfuric acid anhydride bond driven by GTP hydrolysis by CysN coupled to ATP hydrolysis by CysD. The chain is Sulfate adenylyltransferase subunit 2 from Escherichia coli O6:K15:H31 (strain 536 / UPEC).